Reading from the N-terminus, the 117-residue chain is Ribosome-binding factor A (117 aa).

The protein belongs to the RbfA family. In terms of assembly, monomer. Binds 30S ribosomal subunits, but not 50S ribosomal subunits or 70S ribosomes.

The protein resides in the cytoplasm. Its function is as follows. One of several proteins that assist in the late maturation steps of the functional core of the 30S ribosomal subunit. Associates with free 30S ribosomal subunits (but not with 30S subunits that are part of 70S ribosomes or polysomes). Required for efficient processing of 16S rRNA. May interact with the 5'-terminal helix region of 16S rRNA. This chain is Ribosome-binding factor A, found in Leptospira interrogans serogroup Icterohaemorrhagiae serovar copenhageni (strain Fiocruz L1-130).